The chain runs to 96 residues: ATP synthase subunit c (96 aa).

Helical transmembrane passes span 28-50 and 75-95; these read LGAG…NIGA and AVTE…LFVL.

Belongs to the ATPase C chain family. F-type ATPases have 2 components, F(1) - the catalytic core - and F(0) - the membrane proton channel. F(1) has five subunits: alpha(3), beta(3), gamma(1), delta(1), epsilon(1). F(0) has three main subunits: a(1), b(2) and c(10-14). The alpha and beta chains form an alternating ring which encloses part of the gamma chain. F(1) is attached to F(0) by a central stalk formed by the gamma and epsilon chains, while a peripheral stalk is formed by the delta and b chains.

The protein resides in the cell inner membrane. Its function is as follows. F(1)F(0) ATP synthase produces ATP from ADP in the presence of a proton or sodium gradient. F-type ATPases consist of two structural domains, F(1) containing the extramembraneous catalytic core and F(0) containing the membrane proton channel, linked together by a central stalk and a peripheral stalk. During catalysis, ATP synthesis in the catalytic domain of F(1) is coupled via a rotary mechanism of the central stalk subunits to proton translocation. Key component of the F(0) channel; it plays a direct role in translocation across the membrane. A homomeric c-ring of between 10-14 subunits forms the central stalk rotor element with the F(1) delta and epsilon subunits. The chain is ATP synthase subunit c from Petrotoga mobilis (strain DSM 10674 / SJ95).